Reading from the N-terminus, the 136-residue chain is Urease subunit beta (136 aa).

The interval 113–136 (NDEYAGVFGDNGAENVNKKGRKRS) is disordered.

The protein belongs to the urease beta subunit family. In terms of assembly, heterotrimer of UreA (gamma), UreB (beta) and UreC (alpha) subunits. Three heterotrimers associate to form the active enzyme.

The protein resides in the cytoplasm. It carries out the reaction urea + 2 H2O + H(+) = hydrogencarbonate + 2 NH4(+). Its pathway is nitrogen metabolism; urea degradation; CO(2) and NH(3) from urea (urease route): step 1/1. The polypeptide is Urease subunit beta (Staphylococcus aureus (strain Newman)).